Reading from the N-terminus, the 293-residue chain is 4-diphosphocytidyl-2-C-methyl-D-erythritol kinase (293 aa).

Lys16 is a catalytic residue. 99–109 (PMGAGLGGGSS) is a binding site for ATP. The active site involves Asp141.

The protein belongs to the GHMP kinase family. IspE subfamily.

It carries out the reaction 4-CDP-2-C-methyl-D-erythritol + ATP = 4-CDP-2-C-methyl-D-erythritol 2-phosphate + ADP + H(+). It functions in the pathway isoprenoid biosynthesis; isopentenyl diphosphate biosynthesis via DXP pathway; isopentenyl diphosphate from 1-deoxy-D-xylulose 5-phosphate: step 3/6. Its function is as follows. Catalyzes the phosphorylation of the position 2 hydroxy group of 4-diphosphocytidyl-2C-methyl-D-erythritol. The sequence is that of 4-diphosphocytidyl-2-C-methyl-D-erythritol kinase from Burkholderia cenocepacia (strain HI2424).